The following is a 602-amino-acid chain: Zinc finger MYND domain-containing protein 11 (602 aa).

An SAMD1-like winged helix (WH) domain is found at 6-82 (KRRQADTKAI…CKGSKAGIEQ (77 aa)). A PHD-type zinc finger spans residues 100-148 (DWYCFECHLPGEVLICDLCFRVYHSKCLSDEFRLRDSSSHWQCPVCRSI). The Bromo domain maps to 149–255 (KKKHSNKQEM…KDTCHELDEL (107 aa)). Cys-258, Cys-261, Cys-277, and His-281 together coordinate Zn(2+). In terms of domain architecture, PWWP spans 280–331 (NHELVWAKMKGFGFWPAKVMQKEDNQVDVRFFGHHHQRAWIPSENIQDITVN). Residues 291–310 (FGFWPAKVMQKEDNQVDVRF) form an aromatic cage required for H3.3K36me3-specific binding region. A Glycyl lysine isopeptide (Lys-Gly) (interchain with G-Cter in SUMO2) cross-link involves residue Lys-366. The tract at residues 366 to 461 (KNEDRGEEEA…HRSTQTTSDG (96 aa)) is disordered. The Nuclear localization signal signature appears at 394–400 (RAKKGRR). Glycyl lysine isopeptide (Lys-Gly) (interchain with G-Cter in SUMO2) cross-links involve residues Lys-407 and Lys-408. At Ser-421 the chain carries Phosphoserine. Positions 435 to 461 (SVSTQTKKLSASSPRMLHRSTQTTSDG) are enriched in polar residues. Positions 563, 566, 574, 575, 581, 585, 594, and 598 each coordinate Zn(2+). The MYND-type zinc-finger motif lies at 563-598 (CYNCEEEAMYHCCWNTSYCSIKCQQEHWHAEHKRTC).

In terms of assembly, homooligomer; forms homooligomers via its C-terminus. Interacts with histone H3.3 trimethylated at 'Lys-36' (H3.3K36me3). Interacts (via MYND-type zinc finger) with NCOR1. Interacts (via MYND-type zinc finger) with MGA protein (via PXLXP motif). Interacts (via MYND-type zinc finger) with EZH2. Interacts with EMSY and E2F6. Interacts with PIAS1 and UBE2I. Ubiquitinated, leading to proteasomal degradation. In terms of processing, sumoylated following its interaction with PIAS1 and UBE2I.

The protein localises to the nucleus. It localises to the chromosome. Functionally, chromatin reader that specifically recognizes and binds histone H3.3 trimethylated at 'Lys-36' (H3.3K36me3) and regulates RNA polymerase II elongation. Does not bind other histone H3 subtypes (H3.1 or H3.2). Colocalizes with highly expressed genes and functions as a transcription corepressor by modulating RNA polymerase II at the elongation stage. Binds non-specifically to dsDNA. Acts as a tumor-suppressor by repressing a transcriptional program essential for tumor cell growth. This is Zinc finger MYND domain-containing protein 11 (Zmynd11) from Mus musculus (Mouse).